We begin with the raw amino-acid sequence, 359 residues long: Ferredoxin--NADP reductase (359 aa).

FAD contacts are provided by aspartate 48, glutamine 56, tyrosine 61, alanine 101, phenylalanine 139, aspartate 304, and serine 345.

The protein belongs to the ferredoxin--NADP reductase type 2 family. In terms of assembly, homodimer. The cofactor is FAD.

The catalysed reaction is 2 reduced [2Fe-2S]-[ferredoxin] + NADP(+) + H(+) = 2 oxidized [2Fe-2S]-[ferredoxin] + NADPH. The sequence is that of Ferredoxin--NADP reductase from Ralstonia pickettii (strain 12J).